Reading from the N-terminus, the 241-residue chain is MNKDCIFAAPIEKLGDFTFDENVAEVFPDMIQRSVPGYSNIITAIGMFAERFVTANSLVYDLGCSRGAATLSARRHITQPNVKIIGVDNSLPMVERCRQHINAYQSDIPVEILCDDIRNIKIENASMVILNFTLQFVPQQDRQLLLEKIYQGLNPNGGLVLSEKFRFENKKMDDLLIDFHHQFKRANGYSELEVSQKRTALENVMRTDSIETHKERLKSAGFSQIELWFQCFNFGSMVAIK.

S-adenosyl-L-methionine is bound by residues Y38, 63–65 (GCS), 88–89 (DN), 116–117 (DI), N131, and R198.

The protein belongs to the class I-like SAM-binding methyltransferase superfamily. Cx-SAM synthase family. Homodimer.

The catalysed reaction is prephenate + S-adenosyl-L-methionine = carboxy-S-adenosyl-L-methionine + 3-phenylpyruvate + H2O. Catalyzes the conversion of S-adenosyl-L-methionine (SAM) to carboxy-S-adenosyl-L-methionine (Cx-SAM). This Histophilus somni (strain 129Pt) (Haemophilus somnus) protein is Carboxy-S-adenosyl-L-methionine synthase.